A 235-amino-acid polypeptide reads, in one-letter code: 7-cyano-7-deazaguanine synthase (235 aa).

Position 13-23 (13-23 (FSGGLDSTTCL)) interacts with ATP. The Zn(2+) site is built by cysteine 197, cysteine 207, cysteine 210, and cysteine 213.

It belongs to the QueC family. Zn(2+) serves as cofactor.

It carries out the reaction 7-carboxy-7-deazaguanine + NH4(+) + ATP = 7-cyano-7-deazaguanine + ADP + phosphate + H2O + H(+). The protein operates within purine metabolism; 7-cyano-7-deazaguanine biosynthesis. In terms of biological role, catalyzes the ATP-dependent conversion of 7-carboxy-7-deazaguanine (CDG) to 7-cyano-7-deazaguanine (preQ(0)). This chain is 7-cyano-7-deazaguanine synthase, found in Solidesulfovibrio magneticus (strain ATCC 700980 / DSM 13731 / RS-1) (Desulfovibrio magneticus).